The primary structure comprises 1499 residues: DENN domain-containing protein 4B (1499 aa).

The segment at 26 to 45 is disordered; it reads PEEKWVPEPTGPLRPPRPAE. Residues 34–44 are compositionally biased toward pro residues; the sequence is PTGPLRPPRPA. Residues 44–203 form the MABP domain; that stretch reads AEPITDVAVI…AVYLCYKVGL (160 aa). The region spanning 195-369 is the uDENN domain; sequence VYLCYKVGLA…NVPFPSPQRP (175 aa). The 137-residue stretch at 390–526 folds into the cDENN domain; the sequence is PLPLSGASFL…PYKLLLATLT (137 aa). Positions 528-644 constitute a dDENN domain; that stretch reads LYQQLDQTYT…ECSFGSARHA (117 aa). The tract at residues 717 to 744 is disordered; sequence PQEQQGALPVPGPSRSAPSSPAPRRTKQ. Low complexity predominate over residues 729 to 739; that stretch reads PSRSAPSSPAP. PPR repeat units lie at residues 775 to 811 and 812 to 846; these read WFLC…VVLP and DEVC…GIVP. 3 disordered regions span residues 890 to 968, 988 to 1115, and 1204 to 1226; these read PLKD…ARGT, PRGS…SLGS, and RPSA…APAP. Low complexity predominate over residues 897–915; the sequence is QQQQQQQQQQQKQQVAEQQ. Positions 933 to 942 are enriched in polar residues; the sequence is RPLQRQTTWA. Serine 951 is subject to Phosphoserine. Over residues 1074-1083 the composition is skewed to pro residues; that stretch reads IPPPELPSDL. Serine 1090 is modified (phosphoserine). Over residues 1103–1115 the composition is skewed to low complexity; sequence GSTASESSASLGS.

The protein localises to the golgi apparatus. In terms of biological role, guanine nucleotide exchange factor (GEF) which may activate RAB10. Promotes the exchange of GDP to GTP, converting inactive GDP-bound Rab proteins into their active GTP-bound form. The chain is DENN domain-containing protein 4B (Dennd4b) from Mus musculus (Mouse).